A 248-amino-acid chain; its full sequence is Small ribosomal subunit protein eS6 (248 aa).

The interval 213–248 (LLAQRKKESKAKREEAKRRRSASMRESKSSISSDKK) is disordered. Over residues 223-248 (AKREEAKRRRSASMRESKSSISSDKK) the composition is skewed to basic and acidic residues.

Belongs to the eukaryotic ribosomal protein eS6 family. In terms of assembly, component of the small ribosomal subunit. Part of the small subunit (SSU) processome, composed of more than 70 proteins and the RNA chaperone small nucleolar RNA (snoRNA) U3. In terms of processing, ribosomal protein S6 is the major substrate of protein kinases in eukaryote ribosomes.

It is found in the cytoplasm. It localises to the nucleus. Its subcellular location is the nucleolus. Functionally, component of the 40S small ribosomal subunit. Plays an important role in controlling cell growth and proliferation through the selective translation of particular classes of mRNA. Part of the small subunit (SSU) processome, first precursor of the small eukaryotic ribosomal subunit. During the assembly of the SSU processome in the nucleolus, many ribosome biogenesis factors, an RNA chaperone and ribosomal proteins associate with the nascent pre-rRNA and work in concert to generate RNA folding, modifications, rearrangements and cleavage as well as targeted degradation of pre-ribosomal RNA by the RNA exosome. In Glossina morsitans morsitans (Savannah tsetse fly), this protein is Small ribosomal subunit protein eS6 (RpS6).